The chain runs to 356 residues: tRNA N6-adenosine threonylcarbamoyltransferase (356 aa).

His-115 and His-119 together coordinate Fe cation. Substrate is bound by residues 138–142, Asp-171, Gly-184, and Asn-283; that span reads LVSGG. Asp-311 serves as a coordination point for Fe cation.

The protein belongs to the KAE1 / TsaD family. The cofactor is Fe(2+).

It localises to the cytoplasm. It carries out the reaction L-threonylcarbamoyladenylate + adenosine(37) in tRNA = N(6)-L-threonylcarbamoyladenosine(37) in tRNA + AMP + H(+). Functionally, required for the formation of a threonylcarbamoyl group on adenosine at position 37 (t(6)A37) in tRNAs that read codons beginning with adenine. Is involved in the transfer of the threonylcarbamoyl moiety of threonylcarbamoyl-AMP (TC-AMP) to the N6 group of A37, together with TsaE and TsaB. TsaD likely plays a direct catalytic role in this reaction. This chain is tRNA N6-adenosine threonylcarbamoyltransferase, found in Prochlorococcus marinus (strain MIT 9301).